The chain runs to 156 residues: Nascent polypeptide-associated complex subunit beta (156 aa).

Disordered stretches follow at residues methionine 1–threonine 42 and glutamine 129–glutamate 156. Residues asparagine 38–phenylalanine 103 form the NAC-A/B domain.

Belongs to the NAC-beta family. As to quaternary structure, part of the nascent polypeptide-associated complex (NAC), consisting of EGD2 and EGD1. NAC associates with ribosomes via EGD1.

The protein localises to the cytoplasm. The protein resides in the nucleus. In terms of biological role, component of the nascent polypeptide-associated complex (NAC), a dynamic component of the ribosomal exit tunnel, protecting the emerging polypeptides from interaction with other cytoplasmic proteins to ensure appropriate nascent protein targeting. The NAC complex also promotes mitochondrial protein import by enhancing productive ribosome interactions with the outer mitochondrial membrane and blocks the inappropriate interaction of ribosomes translating non-secretory nascent polypeptides with translocation sites in the membrane of the endoplasmic reticulum. EGD1 may act as a transcription factor that exert a negative effect on the expression of several genes that are transcribed by RNA polymerase II. This Candida glabrata (strain ATCC 2001 / BCRC 20586 / JCM 3761 / NBRC 0622 / NRRL Y-65 / CBS 138) (Yeast) protein is Nascent polypeptide-associated complex subunit beta (EGD1).